The sequence spans 411 residues: Putative ion-transport protein YfeO (411 aa).

11 helical membrane-spanning segments follow: residues 9–29 (MLLLSLPALIIGVASSLVLIA), 54–74 (DSPFWIVGMLTLTGIVVGLII), 99–119 (ALPGLLLALIIGLAGGVSLGP), 149–169 (ILASAGTIGALFGTPVAAALI), 186–206 (LFAPLMAAAAGSLTTSLFFHP), 223–243 (IASGAIVAAIAIAAGMVAVWC), 258–278 (VLILGIGGFILGILGVIGGPL), 296–316 (LGAGDYFTLAAVKLAALVIAA), 322–342 (GGRIFPAVFIGAALGLMLHAH), 343–363 (VEAVPAAITVSCAILGLVLVV), and 386–406 (LLCIVMLPAWLLLAGKPLLAA).

It belongs to the chloride channel (TC 2.A.49) family.

Its subcellular location is the cell membrane. This is Putative ion-transport protein YfeO from Salmonella schwarzengrund (strain CVM19633).